A 253-amino-acid chain; its full sequence is Indole-3-glycerol phosphate synthase (253 aa).

Belongs to the TrpC family.

It catalyses the reaction 1-(2-carboxyphenylamino)-1-deoxy-D-ribulose 5-phosphate + H(+) = (1S,2R)-1-C-(indol-3-yl)glycerol 3-phosphate + CO2 + H2O. The protein operates within amino-acid biosynthesis; L-tryptophan biosynthesis; L-tryptophan from chorismate: step 4/5. This is Indole-3-glycerol phosphate synthase from Bacillus mycoides (strain KBAB4) (Bacillus weihenstephanensis).